The chain runs to 1167 residues: MTNEAINQQPQTEAAFNPQQFINNLQVAFIKVDNVVASFDPNQKPIVDKNDRDNRQAFEKISQLREEFANKAIKNPTKKNQYFSSFISKSNDLIDKDNLIDTGSSIKSFQKFGTQRYQIFMNWVSHQNDPSKINTQKIRGFMENIIQPPISDDKEKAEFLRSAKQAFAGIIIGNQIRSDQKFMGVFDESLKERQEAEKNGEPNGDPTGGDWLDIFLSFVFNKKQSSDLKETLNQEPVPHVQPDVATTTTDIQSLPPEARDLLDERGNFSKFTLGDMNMLDVEGVADIDPNYKFNQLLIHNNALSSVLMGSHNGIEPEKVSLLYGNNGGPEARHDWNATVGYKNQRGDNVATLINVHMKNGSGLVIAGGEKGINNPSFYLYKEDQLTGSQRALSQEEIQNKVDFMEFLAQNNAKLDNLSKKEKEKFQNEIEDFQKDSKAYLDALGNDHIAFVSKKDKKHLALVAEFGNGELSYTLKDYGKKADKALDREAKTTLQGSLKHDGVMFVDYSNFKYTNASKSPDKGVGATNGVSHLEAGFSKVAVFNLPNLNNLAITSVVRQDLEDKLIAKGLSPQEANKLVKDFLSSNKELVGKALNFNKAVAEAKNTGNYDEVKQAQKDLEKSLKKRERLEKDVAKNLESKSGNKNKMEAKSQANSQKDEIFALINKEANRDARAIAYAQNLKGIKRELSDKLENINKDLKDFSKSFDEFKNGKNKDFSKAEETLKALKGSVKDLGINPEWISKVENLNAALNEFKNGKNKDFSKVTQAKSDLENSIKDVIINQKITDKVDNLNQAVSVAKATGDFSGVEQALADLKNFSKEQLAQQAQKNEDFNTGKNSALYQSVKNGVNGTLVGNGLSKAEATTLSKNFSDIKKELNAKLGNFNNNNNNGLENSTEPIYTQVAKKVKAKIDRLDQIASGLGDVGQAASFLLKRHDKVDDLSKVGLSANHEPIYATIDDLGGPFPLKRHDKVDDLSKVGLSREQKLTQKIDNLNQAVSEAKASHFDNLDQMIDKLKDSTKKNVVNLYVESAKKVPTSLSAKLDNYATNSHTRINSNVKNGTINEKATGMLTQKNSEWLKLVNDKIVAHNVGSAPLSAYDKIGFNQKNMKDYSDSFKFSTRLSNAVKDIKSGFVQFLTNIFSMGSYSLMKASVEHGVKNTNTKGGFQKS.

The segment at 632-651 (VAKNLESKSGNKNKMEAKSQ) is disordered.

Its function is as follows. May be necessary for the transcription, folding, export, or function of the cytotoxin. The chain is Cytotoxicity-associated immunodominant antigen (cagA) from Helicobacter pylori (strain J99 / ATCC 700824) (Campylobacter pylori J99).